A 540-amino-acid polypeptide reads, in one-letter code: Gamma-cadinene synthase (540 aa).

Mg(2+) is bound by residues Asp292, Asp296, Asp436, Ser440, and Glu444. Residues 292–296 carry the DDXXD motif motif; sequence DDTYD.

The protein belongs to the terpene synthase family. It depends on Mg(2+) as a cofactor. Mn(2+) is required as a cofactor.

It carries out the reaction (2E,6E)-farnesyl diphosphate = (+)-gamma-cadinene + diphosphate. It functions in the pathway secondary metabolite biosynthesis; terpenoid biosynthesis. Sesquiterpene synthase that catalyzes the cyclization of trans,trans-farnesyl diphosphate (FPP) to gamma cadinene. The protein is Gamma-cadinene synthase (CDS) of Ocimum basilicum (Sweet basil).